A 1058-amino-acid polypeptide reads, in one-letter code: Ubiquitin-like modifier-activating enzyme 1 (1058 aa).

Residues 1–47 are disordered; sequence MSSSPLSKKRRVSGPDPKPGSNCSPAQSVLPQVPSAPTNGMAKNGSE. Serine 2 is subject to N-acetylserine. Phosphoserine is present on residues serine 4, serine 13, serine 21, serine 24, and serine 46. Polar residues predominate over residues 21-38; that stretch reads SNCSPAQSVLPQVPSAPT. Tyrosine 55 carries the post-translational modification Phosphotyrosine. 2 consecutive repeat copies span residues 63–199 and 459–611. The interval 63 to 611 is 2 approximate repeats; it reads GHEAMKRLQT…GTKGNVQVVI (549 aa). Residues alanine 478, aspartate 504, arginine 515, lysine 528, and 576–577 each bind ATP; that span reads DN. The residue at position 528 (lysine 528) is an N6-succinyllysine. Cysteine 632 serves as the catalytic Glycyl thioester intermediate. The residue at position 671 (lysine 671) is an N6-acetyllysine. Residue threonine 800 is modified to Phosphothreonine. A phosphoserine mark is found at serine 810, serine 816, serine 820, and serine 835. Residue lysine 980 is modified to N6-acetyllysine.

The protein belongs to the ubiquitin-activating E1 family. In terms of assembly, monomer. Ubiquitous.

The protein localises to the cytoplasm. The protein resides in the mitochondrion. It localises to the nucleus. It catalyses the reaction ATP + ubiquitin + [E1 ubiquitin-activating enzyme]-L-cysteine = AMP + diphosphate + S-ubiquitinyl-[E1 ubiquitin-activating enzyme]-L-cysteine.. Its pathway is protein modification; protein ubiquitination. Catalyzes the first step in ubiquitin conjugation to mark cellular proteins for degradation through the ubiquitin-proteasome system. Activates ubiquitin by first adenylating its C-terminal glycine residue with ATP, and thereafter linking this residue to the side chain of a cysteine residue in E1, yielding a ubiquitin-E1 thioester and free AMP. Essential for the formation of radiation-induced foci, timely DNA repair and for response to replication stress. Promotes the recruitment of TP53BP1 and BRCA1 at DNA damage sites. The chain is Ubiquitin-like modifier-activating enzyme 1 (UBA1) from Oryctolagus cuniculus (Rabbit).